Reading from the N-terminus, the 459-residue chain is Ribulose bisphosphate carboxylase large chain (459 aa).

Lys4 carries the N6,N6,N6-trimethyllysine modification. Residues Asn113 and Thr163 each coordinate substrate. The active-site Proton acceptor is Lys165. A substrate-binding site is contributed by Lys167. Residues Lys191, Asp193, and Glu194 each contribute to the Mg(2+) site. The residue at position 191 (Lys191) is an N6-carboxylysine. The Proton acceptor role is filled by His284. Substrate contacts are provided by Arg285, His317, and Ser369.

Belongs to the RuBisCO large chain family. Type I subfamily. In terms of assembly, heterohexadecamer of 8 large chains and 8 small chains; disulfide-linked. The disulfide link is formed within the large subunit homodimers. Mg(2+) is required as a cofactor. Post-translationally, the disulfide bond which can form in the large chain dimeric partners within the hexadecamer appears to be associated with oxidative stress and protein turnover.

The protein localises to the plastid. It localises to the chloroplast. The catalysed reaction is 2 (2R)-3-phosphoglycerate + 2 H(+) = D-ribulose 1,5-bisphosphate + CO2 + H2O. It catalyses the reaction D-ribulose 1,5-bisphosphate + O2 = 2-phosphoglycolate + (2R)-3-phosphoglycerate + 2 H(+). In terms of biological role, ruBisCO catalyzes two reactions: the carboxylation of D-ribulose 1,5-bisphosphate, the primary event in carbon dioxide fixation, as well as the oxidative fragmentation of the pentose substrate in the photorespiration process. Both reactions occur simultaneously and in competition at the same active site. In Ceratopetalum gummiferum (New South Wales Christmas bush), this protein is Ribulose bisphosphate carboxylase large chain.